Consider the following 181-residue polypeptide: MIQGEILGDKVLINDVEKAKEIYKLGYYGKPLDITKPKSPEDIKKPLILSLIEALYLSKKKIIEVIRDGKVIDDALLYKIGMENIPRFELLYTVYEDLREKKFVVRSGMKYGADFAIYTVAPGLEHAPYLVIAIDEEQEISPNEILGFGRVSHSTRKNLILSIVNQRNRSIRYIMFKWLKL.

Residues Y118, H126, and K157 contribute to the active site.

It belongs to the tRNA-intron endonuclease family. Archaeal short subfamily. In terms of assembly, homotetramer; although the tetramer contains four active sites, only two participate in the cleavage. Therefore, it should be considered as a dimer of dimers.

The catalysed reaction is pretRNA = a 3'-half-tRNA molecule with a 5'-OH end + a 5'-half-tRNA molecule with a 2',3'-cyclic phosphate end + an intron with a 2',3'-cyclic phosphate and a 5'-hydroxyl terminus.. In terms of biological role, endonuclease that removes tRNA introns. Cleaves pre-tRNA at the 5'- and 3'-splice sites to release the intron. The products are an intron and two tRNA half-molecules bearing 2',3' cyclic phosphate and 5'-OH termini. Recognizes a pseudosymmetric substrate in which 2 bulged loops of 3 bases are separated by a stem of 4 bp. The polypeptide is tRNA-splicing endonuclease (Sulfolobus acidocaldarius (strain ATCC 33909 / DSM 639 / JCM 8929 / NBRC 15157 / NCIMB 11770)).